Reading from the N-terminus, the 537-residue chain is Synaptotagmin-C (537 aa).

Residues 1–52 (MSGDGEDELCRNALALVNELCFSVRGNHNNEKCIEFSYLLRDRDRTRHIETD) are Vesicular-facing. Residues 53–78 (ISVSLLSVIVTFCGIVLLGVSLFVSW) form a helical membrane-spanning segment. The Cytoplasmic portion of the chain corresponds to 79 to 537 (KLCWIPWRDK…TIVVESPHSV (459 aa)). Disordered stretches follow at residues 92–111 (PQRR…HHSH) and 142–200 (IKLS…EFGT). Residues 100–110 (HPHQHLHHHHS) show a composition bias toward basic residues. Over residues 143–174 (KLSQTSPDIPVDTSSGSKENNIPNAHSQQQVS) the composition is skewed to polar residues. The tract at residues 228–477 (EAKKHQKVNC…VIGMCRVGNA (250 aa)) is phospholipid binding. C2 domains follow at residues 236-357 (NCGR…TIWR) and 368-501 (DLGE…EQWH). Residues aspartate 267, aspartate 273, aspartate 325, phenylalanine 326, aspartate 327, serine 330, aspartate 333, aspartate 399, aspartate 405, aspartate 459, and aspartate 461 each coordinate Ca(2+).

Belongs to the synaptotagmin family. In terms of assembly, homodimer or homotrimer (possible). The cofactor is Ca(2+).

It localises to the cytoplasmic vesicle. It is found in the secretory vesicle. Its subcellular location is the synaptic vesicle membrane. The protein resides in the synapse. Its function is as follows. May have a regulatory role in the membrane interactions during trafficking of synaptic vesicles at the active zone of the synapse. It binds acidic phospholipids with a specificity that requires the presence of both an acidic head group and a diacyl backbone. The polypeptide is Synaptotagmin-C (P65-C) (Diplobatis ommata (Ocellated electric ray)).